The sequence spans 123 residues: Small ribosomal subunit protein uS12 (123 aa).

A disordered region spans residues 9–28 (RNGRKRATKKTTTPALKGAP). Residues 18–27 (KTTTPALKGA) are compositionally biased toward low complexity. The residue at position 89 (Asp89) is a 3-methylthioaspartic acid.

Belongs to the universal ribosomal protein uS12 family. Part of the 30S ribosomal subunit. Contacts proteins S8 and S17. May interact with IF1 in the 30S initiation complex.

With S4 and S5 plays an important role in translational accuracy. Functionally, interacts with and stabilizes bases of the 16S rRNA that are involved in tRNA selection in the A site and with the mRNA backbone. Located at the interface of the 30S and 50S subunits, it traverses the body of the 30S subunit contacting proteins on the other side and probably holding the rRNA structure together. The combined cluster of proteins S8, S12 and S17 appears to hold together the shoulder and platform of the 30S subunit. The protein is Small ribosomal subunit protein uS12 of Desulfosudis oleivorans (strain DSM 6200 / JCM 39069 / Hxd3) (Desulfococcus oleovorans).